The following is a 757-amino-acid chain: Cap-specific mRNA (nucleoside-2'-O-)-methyltransferase 1 (757 aa).

The segment at 1-61 (MFQSNQYDEY…EDDEEEEDTP (61 aa)) is disordered. 2 stretches are compositionally biased toward acidic residues: residues 18–32 (EENESNENENENENE) and 40–59 (GDQDSEDSFIYEEDDEEEED). A G-patch domain is found at 62–108 (KLSFGAKFLAKHGHIEGQGLGKEKDGRIDLIEVDRFQSTKGLGFAEN). One can recognise a RrmJ-type SAM-dependent 2'-O-MTase domain in the interval 214-438 (IFINRAAVKM…ERYIICKNFL (225 aa)). S-adenosyl-L-methionine is bound by residues G257, E301, and D352. The active-site Proton acceptor is K392. Residues 538–548 (HKNRQKHHHNN) are compositionally biased toward basic residues. The interval 538 to 670 (HKNRQKHHHN…NNNNNNNNKN (133 aa)) is disordered. Low complexity predominate over residues 549 to 569 (HSNNNNNNNNSNNNNNNNNQH). Residues 570-581 (QHQHHQHQHHQN) show a composition bias toward basic residues. Residues 597–668 (NNNINNNSNN…NNNNNNNNNN (72 aa)) show a composition bias toward low complexity.

It catalyses the reaction a 5'-end (N(7)-methyl 5'-triphosphoguanosine)-ribonucleoside in mRNA + S-adenosyl-L-methionine = a 5'-end (N(7)-methyl 5'-triphosphoguanosine)-(2'-O-methyl-ribonucleoside) in mRNA + S-adenosyl-L-homocysteine + H(+). Its function is as follows. S-adenosyl-L-methionine-dependent methyltransferase that mediates mRNA cap1 2'-O-ribose methylation to the 5'-cap structure of mRNAs. Methylates the ribose of the first nucleotide of a m(7)GpppG-capped mRNA to produce m(7)GpppNmp (cap1). Cap1 modification is linked to higher levels of translation. The sequence is that of Cap-specific mRNA (nucleoside-2'-O-)-methyltransferase 1 from Dictyostelium discoideum (Social amoeba).